A 122-amino-acid polypeptide reads, in one-letter code: uncharacterized protein (122 aa).

This is an uncharacterized protein from Aquifex aeolicus (strain VF5).